A 1209-amino-acid polypeptide reads, in one-letter code: Calcium-activated potassium channel subunit alpha-1 (1209 aa).

Residues 1 to 26 (MANGGGGGGGGSSGSSGGGGGGGGGE) are compositionally biased toward gly residues. Disordered regions lie at residues 1 to 29 (MANG…ETAL) and 42 to 64 (LDAS…SVHE). At 1 to 87 (MANGGGGGGG…VPCDSRGQRM (87 aa)) the chain is on the extracellular side. A compositionally biased stretch (low complexity) spans 45–61 (SSSSSSSSSSSSSSSSS). Residues 88–108 (WWAFLASSMVTFFGGLFIILL) traverse the membrane as a helical segment. Topologically, residues 109-179 (WRTLKYLWTV…MISAQTLTGR (71 aa)) are cytoplasmic. 3 S-palmitoyl cysteine lipidation sites follow: Cys119, Cys120, and Cys122. A helical transmembrane segment spans residues 180–200 (VLVVLVFALSIGALVIYFIDS). Over 201 to 215 (SNPIESCQNFYKDFT) the chain is Extracellular. The chain crosses the membrane as a helical span at residues 216-236 (LQIDMAFNVFFLLYFGLRFIA). Residues 237–240 (ANDK) lie on the Cytoplasmic side of the membrane. The helical transmembrane segment at 241–261 (LWFWLEVNSVVDFFTVPPVFV) threads the bilayer. At 262–265 (SVYL) the chain is on the extracellular side. The chain crosses the membrane as a helical; Voltage-sensor span at residues 266–286 (NRSWLGLRFLRALRLIQFSEI). Topologically, residues 287–301 (LQFLNILKTSNSIKL) are cytoplasmic. A helical membrane pass occupies residues 302–322 (VNLLSIFISTWLTAAGFIHLV). Over 323–336 (ENSGDPWENFQNNQ) the chain is Extracellular. The segment at residues 337–359 (ALTYWECVYLLMVTMSTVGYGDV) is an intramembrane region (pore-forming). The Selectivity for potassium signature appears at 353–356 (TVGY). The Extracellular portion of the chain corresponds to 360 to 368 (YAKTTLGRL). A helical transmembrane segment spans residues 369-389 (FMVFFILGGLAMFASYVPEII). Over 390-1209 (ELIGNRKKYG…DKQKKEMVYR (820 aa)) the chain is Cytoplasmic. The RCK N-terminal 1 domain maps to 408–550 (RKHIVVCGHI…WNWKEGDDAI (143 aa)). 3 residues coordinate Mg(2+): Glu440, Gln463, and Glu465. A segment S7 region spans residues 557-577 (LGFIAQSCLAQGLSTMLANLF). The tract at residues 614–634 (LSFPTVCELCFVKLKLLMIAI) is segment S8. The heme-binding motif stretch occupies residues 682-686 (CKACH). Residues 704–734 (EDEQPPTLSPKKKQRNGGMRNSPNTSPKLMR) form a disordered region. At Thr710 the chain carries Phosphothreonine. Ser712, Ser725, and Ser729 each carry phosphoserine. The tract at residues 784 to 804 (VLSGHVVVCIFGDVSSALIGL) is segment S9. The 145-residue stretch at 786–930 (SGHVVVCIFG…MDRSSPDNSP (145 aa)) folds into the RCK N-terminal 2 domain. A Phosphothreonine modification is found at Thr917. 2 positions are modified to phosphoserine: Ser925 and Ser929. Residues 977–999 (TELVNDTNVQFLDQDDDDDPDTE) carry the Calcium bowl motif. Ca(2+) contacts are provided by Gln986, Asp989, Asp992, and Asp994. The segment S10 stretch occupies residues 1006 to 1026 (FACGTAFAVSVLDSLMSATYF). Low complexity predominate over residues 1160-1185 (RASLSHSSHSSQSSSKKSSSVHSIPS). Residues 1160–1209 (RASLSHSSHSSQSSSKKSSSVHSIPSTANRPNRPKSRESRDKQKKEMVYR) are disordered. The segment covering 1194–1209 (KSRESRDKQKKEMVYR) has biased composition (basic and acidic residues). 2 positions are modified to phosphoserine: Ser1195 and Ser1198.

It belongs to the potassium channel family. Calcium-activated (TC 1.A.1.3) subfamily. KCa1.1/KCNMA1 sub-subfamily. As to quaternary structure, homotetramer; which constitutes the calcium-activated potassium channel. Interacts with beta subunits KCNMB1, KCNMB2, KCNMB3 and KCNMB4. Interacts with gamma subunits LRRC26, LRRC38, LRRC52 and LRRC55. Beta and gamma subunits are accessory, and modulate its activity. Interacts with RAB11B. In terms of processing, phosphorylated. Phosphorylation by kinases such as PKA and/or PKG. In smooth muscles, phosphorylation affects its activity. Post-translationally, palmitoylation by ZDHHC22 and ZDHHC23 within the intracellular linker between the S0 and S1 transmembrane domains regulates localization to the plasma membrane. Depalmitoylated by LYPLA1 and LYPLAL1, leading to retard exit from the trans-Golgi network.

It localises to the cell membrane. It is found in the endoplasmic reticulum membrane. The enzyme catalyses K(+)(in) = K(+)(out). With respect to regulation, ethanol and carbon monoxide-bound heme increase channel activation. Its activity is regulated as follows. Heme inhibits channel activation. Its function is as follows. Potassium channel activated by both membrane depolarization or increase in cytosolic Ca(2+) that mediates export of K(+). It is also activated by the concentration of cytosolic Mg(2+). Its activation dampens the excitatory events that elevate the cytosolic Ca(2+) concentration and/or depolarize the cell membrane. It therefore contributes to repolarization of the membrane potential. Plays a key role in controlling excitability in a number of systems, such as regulation of the contraction of smooth muscle, the tuning of hair cells in the cochlea, regulation of transmitter release, and innate immunity. In smooth muscles, its activation by high level of Ca(2+), caused by ryanodine receptors in the sarcoplasmic reticulum, regulates the membrane potential. In cochlea cells, its number and kinetic properties partly determine the characteristic frequency of each hair cell and thereby helps to establish a tonotopic map. Kinetics of KCNMA1 channels are determined by alternative splicing, phosphorylation status and its combination with modulating beta subunits. Highly sensitive to both iberiotoxin (IbTx) and charybdotoxin (CTX). Potassium channel activated by both membrane depolarization or increase in cytosolic Ca(2+) that mediates export of K(+). This is Calcium-activated potassium channel subunit alpha-1 (Kcnma1) from Rattus norvegicus (Rat).